Here is a 55-residue protein sequence, read N- to C-terminus: MAKGVREKIKLVSSAGTHHFYTTTKNKRLKLEKLELKKFDPVVRKHVIYKEAKIK.

Belongs to the bacterial ribosomal protein bL33 family.

The sequence is that of Large ribosomal subunit protein bL33 from Baumannia cicadellinicola subsp. Homalodisca coagulata.